A 500-amino-acid polypeptide reads, in one-letter code: Probable cytosol aminopeptidase (500 aa).

2 residues coordinate Mn(2+): K262 and D267. The active site involves K274. Mn(2+)-binding residues include D285, D344, and E346. Residue R348 is part of the active site.

This sequence belongs to the peptidase M17 family. Requires Mn(2+) as cofactor.

The protein localises to the cytoplasm. The catalysed reaction is Release of an N-terminal amino acid, Xaa-|-Yaa-, in which Xaa is preferably Leu, but may be other amino acids including Pro although not Arg or Lys, and Yaa may be Pro. Amino acid amides and methyl esters are also readily hydrolyzed, but rates on arylamides are exceedingly low.. The enzyme catalyses Release of an N-terminal amino acid, preferentially leucine, but not glutamic or aspartic acids.. Functionally, presumably involved in the processing and regular turnover of intracellular proteins. Catalyzes the removal of unsubstituted N-terminal amino acids from various peptides. The sequence is that of Probable cytosol aminopeptidase from Ehrlichia ruminantium (strain Welgevonden).